We begin with the raw amino-acid sequence, 238 residues long: tRNA (guanine-N(7)-)-methyltransferase (238 aa).

Residues Glu68, Glu93, Asp120, and Asp143 each contribute to the S-adenosyl-L-methionine site. Asp143 is a catalytic residue. Substrate-binding positions include Lys147, Asp179, and 216-219 (TKFE).

This sequence belongs to the class I-like SAM-binding methyltransferase superfamily. TrmB family.

It carries out the reaction guanosine(46) in tRNA + S-adenosyl-L-methionine = N(7)-methylguanosine(46) in tRNA + S-adenosyl-L-homocysteine. Its pathway is tRNA modification; N(7)-methylguanine-tRNA biosynthesis. Functionally, catalyzes the formation of N(7)-methylguanine at position 46 (m7G46) in tRNA. This Shewanella woodyi (strain ATCC 51908 / MS32) protein is tRNA (guanine-N(7)-)-methyltransferase.